The sequence spans 656 residues: Cyclic AMP-dependent transcription factor ATF-6 alpha (656 aa).

Residues 1 to 137 form a transcription activation region; it reads MESPFSPVLP…SPSSVEPLKE (137 aa). The Cytoplasmic portion of the chain corresponds to 1 to 377; that stretch reads MESPFSPVLP…VMIVLAFIML (377 aa). A Glycyl lysine isopeptide (Lys-Gly) (interchain with G-Cter in SUMO2) cross-link involves residue K75. The interval 75–169 is disordered; that stretch reads KAEPQPLSPA…MSSKPSVQPK (95 aa). Composition is skewed to low complexity over residues 78–101 and 111–121; these read PQPLSPASSSCSISSPRSTDSCSS and LLSSSQSPLSL. Residue K139 forms a Glycyl lysine isopeptide (Lys-Gly) (interchain with G-Cter in ubiquitin) linkage. The 64-residue stretch at 293–356 folds into the bZIP domain; sequence VLRRQQRMIK…DEVVSENQRL (64 aa). The segment at 295–326 is basic motif; sequence RRQQRMIKNRESACQSRKKKKEYMLGLEARLK. The interval 335–342 is leucine-zipper; the sequence is LKKENGSL. The chain crosses the membrane as a helical; Signal-anchor for type II membrane protein span at residues 378-398; sequence NYGPMSMLEQESRRVKPSVSP. The tract at residues 391–429 is disordered; sequence RVKPSVSPANQRRHLLEFSAKEVKDTSDGDNQKDSYSYD. At 399–656 the chain is on the lumenal side; sequence ANQRRHLLEF…VVSTIPESLQ (258 aa). The span at 404–427 shows a compositional bias: basic and acidic residues; it reads HLLEFSAKEVKDTSDGDNQKDSYS. Positions 455–575 are interaction with THBS4; it reads QPLINTTESL…ATTHNKTTRP (121 aa). 3 N-linked (GlcNAc...) asparagine glycosylation sites follow: N459, N570, and N629. Positions 632-650 are enriched in low complexity; it reads STFFGSPPTTTETTHVVST. Residues 632 to 656 are disordered; that stretch reads STFFGSPPTTTETTHVVSTIPESLQ.

Belongs to the bZIP family. ATF subfamily. Interacts with XBP1 isoform 2; the interaction occurs in a ER stress-dependent manner. Interacts with LACC1. In terms of assembly, interacts with THBS4 (via EGF-like 3; calcium-binding domain) which facilitates its processing, activation and nuclear translocation. Interacts (via lumenal domain) with THBS1. As to quaternary structure, homodimer and heterodimer with ATF6-beta. The dimer interacts with the nuclear transcription factor Y (NF-Y) trimer through direct binding to NF-Y subunit C (NF-YC). Also interacts with the transcription factors GTF2I, YY1 and SRF. During unfolded protein response, a fragment of approximately 50 kDa containing the cytoplasmic transcription factor domain is released by proteolysis. The cleavage seems to be performed sequentially by site-1 (MBTPS1, S1P) and site-2 (MBTPS2, S2P) proteases. Post-translationally, N-glycosylated; in its luminal domain. The glycosylation status may serve as a sensor for ER homeostasis, resulting in ATF6 activation to trigger the unfolded protein response (UPR). In terms of processing, ubiquitinated by RNF186 at Lys-139, which is required for pattern recognition receptor-induced unfolded protein response-associated outcomes.

It is found in the endoplasmic reticulum membrane. Its subcellular location is the golgi apparatus membrane. The protein localises to the nucleus. Functionally, precursor of the transcription factor form (Processed cyclic AMP-dependent transcription factor ATF-6 alpha), which is embedded in the endoplasmic reticulum membrane. Endoplasmic reticulum stress promotes processing of this form, releasing the transcription factor form that translocates into the nucleus, where it activates transcription of genes involved in the unfolded protein response (UPR). Transcription factor that initiates the unfolded protein response (UPR) during endoplasmic reticulum stress by activating transcription of genes involved in the UPR. Binds DNA on the 5'-CCAC[GA]-3'half of the ER stress response element (ERSE) (5'-CCAAT-N(9)-CCAC[GA]-3') and of ERSE II (5'-ATTGG-N-CCACG-3'). Binding to ERSE requires binding of NF-Y to ERSE. Could also be involved in activation of transcription by the serum response factor. May play a role in foveal development and cone function in the retina. This chain is Cyclic AMP-dependent transcription factor ATF-6 alpha (Atf6), found in Mus musculus (Mouse).